The following is a 1118-amino-acid chain: Isoleucine--tRNA ligase (1118 aa).

Residues 64–74 (PFANGLPHYGH) carry the 'HIGH' region motif. The 'KMSKS' region motif lies at 647–651 (KLSKR). Lys650 contributes to the ATP binding site.

This sequence belongs to the class-I aminoacyl-tRNA synthetase family. IleS type 2 subfamily. As to quaternary structure, monomer. Zn(2+) serves as cofactor.

Its subcellular location is the cytoplasm. The enzyme catalyses tRNA(Ile) + L-isoleucine + ATP = L-isoleucyl-tRNA(Ile) + AMP + diphosphate. Catalyzes the attachment of isoleucine to tRNA(Ile). As IleRS can inadvertently accommodate and process structurally similar amino acids such as valine, to avoid such errors it has two additional distinct tRNA(Ile)-dependent editing activities. One activity is designated as 'pretransfer' editing and involves the hydrolysis of activated Val-AMP. The other activity is designated 'posttransfer' editing and involves deacylation of mischarged Val-tRNA(Ile). This Ehrlichia ruminantium (strain Gardel) protein is Isoleucine--tRNA ligase.